The chain runs to 377 residues: Chorismate synthase (377 aa).

Arginine 48 and arginine 54 together coordinate NADP(+). Residues 125–127, 238–239, glycine 278, 293–297, and arginine 319 each bind FMN; these read RSS, NA, and KPTSS.

It belongs to the chorismate synthase family. Homotetramer. Requires FMNH2 as cofactor.

It catalyses the reaction 5-O-(1-carboxyvinyl)-3-phosphoshikimate = chorismate + phosphate. It participates in metabolic intermediate biosynthesis; chorismate biosynthesis; chorismate from D-erythrose 4-phosphate and phosphoenolpyruvate: step 7/7. In terms of biological role, catalyzes the anti-1,4-elimination of the C-3 phosphate and the C-6 proR hydrogen from 5-enolpyruvylshikimate-3-phosphate (EPSP) to yield chorismate, which is the branch point compound that serves as the starting substrate for the three terminal pathways of aromatic amino acid biosynthesis. This reaction introduces a second double bond into the aromatic ring system. The polypeptide is Chorismate synthase (Aromatoleum aromaticum (strain DSM 19018 / LMG 30748 / EbN1) (Azoarcus sp. (strain EbN1))).